We begin with the raw amino-acid sequence, 71 residues long: MNTFYDVQQLLKTFGHIVYFGDRELEIEFMLDELKELYMNHMIEKEQWARAAAVLRKELEQTKNGRDFYKG.

This is an uncharacterized protein from Bacillus subtilis (strain 168).